The sequence spans 181 residues: Alkyl hydroperoxide reductase AhpD (181 aa).

Residue cysteine 131 is the Proton donor of the active site. Residues cysteine 131 and cysteine 134 are joined by a disulfide bond. Residue cysteine 134 is the Cysteine sulfenic acid (-SOH) intermediate of the active site.

It belongs to the AhpD family.

It catalyses the reaction N(6)-[(R)-dihydrolipoyl]-L-lysyl-[lipoyl-carrier protein] + a hydroperoxide = N(6)-[(R)-lipoyl]-L-lysyl-[lipoyl-carrier protein] + an alcohol + H2O. In terms of biological role, antioxidant protein with alkyl hydroperoxidase activity. Required for the reduction of the AhpC active site cysteine residues and for the regeneration of the AhpC enzyme activity. The sequence is that of Alkyl hydroperoxide reductase AhpD from Azorhizobium caulinodans (strain ATCC 43989 / DSM 5975 / JCM 20966 / LMG 6465 / NBRC 14845 / NCIMB 13405 / ORS 571).